Consider the following 246-residue polypeptide: Sensory transduction protein LytT (246 aa).

Positions 3-117 (KVLVVDDEML…RIVQTLKKYK (115 aa)) constitute a Response regulatory domain. Asp-54 is subject to 4-aspartylphosphate. Positions 142–246 (LALPIEESIV…AKELKKLLRI (105 aa)) constitute an HTH LytTR-type domain.

In terms of processing, phosphorylated by LytS.

The protein localises to the cytoplasm. In terms of biological role, member of the two-component regulatory system LytS/LytT that probably regulates genes involved in cell wall metabolism. The protein is Sensory transduction protein LytT (lytT) of Bacillus anthracis.